A 250-amino-acid chain; its full sequence is DNA repair protein RecO (250 aa).

This sequence belongs to the RecO family.

In terms of biological role, involved in DNA repair and RecF pathway recombination. This Staphylococcus aureus (strain Mu3 / ATCC 700698) protein is DNA repair protein RecO.